A 998-amino-acid chain; its full sequence is MNRRRKFLLASVLALQNSSFIYPSCQKCFSRIILVSKRSNCPKCGSTGESGNANYRYKLSLKVAESNKLFVITVFGSCLDTFFGLTATGLHRYIQDPNKIPETLDNDTTQNLLTKAVETCFVGQSFIFGVTNFENQPGQGSDASNFLQQCSDHKRKAKALVACQIVLPDPGIAGFTVIDYFHQLLQTFNFRKLQCDSQAPNNHLLALDHSNSDLSSIYTSDSTSDFFKSCSKDTFSKFWQPSLEFTCIVSQLTDNDDFSASEQSKAFGTLQQNRKSISIAEATGSSSCHDPIQDSWSLVSYMDKKSTAEKLGKELGLQAKELSAVHSSHHEIGVNDSNLFSLEMREPLESSNTKSFHSAVEIKNRSQHELPCFQHHGIDTPTSLQKRSACCPPSLLRLEETASSSQDGDPQIWDDLPFSESLNKFLAVLESEIAVTQADVSSRKHHVDNDIDKFHADHSRLSVTPQRTTGALHTPPIALRSSQVIVKANCSKDDFLFNCKGNLSPSVEKESQPDNKVEAVSVNHNGRDMSEYFLPNPYLSALSSSSKDLETIVTLKKTIRISPHRESDHSSLNNKYLNGCGEISVSEMNEKLTTLCYRKYNDVSDLCKLENKQYCRWSKNQDDSFTICRKLTYPLETLCNSPNRSTNTLKEMPWGHINNNVTQSYSIGYEGSYDASADLFDDIAKEMDIATEITKKSQDILLKWGTSLAESHPSESDFSLRSLSEDFIQPSQKLSLQSLSDSRHSRTCSPTPHFQSDSEYNFENSQDFVPCSQSTPISGFHQTRIHGINRAFKKPVFYSDLDGNYEKIRIFPENDKQQASPSCPKNIKTPSQKIRSPIVSGVSQPDVFNHYPFAECHETDSDEWVPPTTQKIFPSDMLGFQGIGLGKCLAAYHFPDQQELPRKKLKHIRQGTNKGLIKKKLKNMLAAVVTKKKTHKYNCKSSGWISKCPDIQVLAAPQLHPILGPDSCSEVKCCLPFSEKGPPSVCETRSAWSPELFS.

Positions 815–834 are disordered; it reads DKQQASPSCPKNIKTPSQKI. A compositionally biased stretch (polar residues) spans 817–834; sequence QQASPSCPKNIKTPSQKI.

In terms of tissue distribution, highly expressed in colorectal and lung cancer tissues.

It is found in the cytoplasm. Its subcellular location is the nucleus. In terms of biological role, may be an anti-apoptotic protein involved in DNA repair or cell survival. This Homo sapiens (Human) protein is DNA damage-induced apoptosis suppressor protein (DDIAS).